A 374-amino-acid chain; its full sequence is Probable neutral protease 2 homolog TRV_05367 (374 aa).

Residues Met-1 to Gly-19 form the signal peptide. Positions Phe-20–Arg-189 are excised as a propeptide. Cystine bridges form between Cys-197–Cys-267 and Cys-274–Cys-292. His-317 provides a ligand contact to Zn(2+). Glu-318 is a catalytic residue. Zn(2+) is bound by residues His-321 and Asp-332.

Belongs to the peptidase M35 family. Zn(2+) is required as a cofactor.

Its subcellular location is the secreted. It carries out the reaction Preferential cleavage of bonds with hydrophobic residues in P1'. Also 3-Asn-|-Gln-4 and 8-Gly-|-Ser-9 bonds in insulin B chain.. Its function is as follows. Probable secreted metalloprotease that shows high activities on basic nuclear substrates such as histone and protamine. May be involved in virulence. The polypeptide is Probable neutral protease 2 homolog TRV_05367 (Trichophyton verrucosum (strain HKI 0517)).